The sequence spans 164 residues: MIRINYFNENDINMDFWKKFCNKILKTAYNYFNFNYDIELSITFVNDLKAQQINQQYRNHSYIADVTSFPVEMTENEIKAIGFRELGDMFINLNEAKRKAIKYNHDLNSEMGFLFVHGFLHLLGYDHEDSNDEKIMFDLQDQILKLNNLEYIIKFNEDDYLESN.

Positions 117, 121, and 127 each coordinate Zn(2+).

The protein belongs to the endoribonuclease YbeY family. Zn(2+) serves as cofactor.

It is found in the cytoplasm. Functionally, single strand-specific metallo-endoribonuclease involved in late-stage 70S ribosome quality control and in maturation of the 3' terminus of the 16S rRNA. This Mycoplasma mycoides subsp. mycoides SC (strain CCUG 32753 / NCTC 10114 / PG1) protein is Endoribonuclease YbeY.